The following is a 444-amino-acid chain: MTVTTFSELELDESLLEALQDKGFTRPTAIQAAAIPPALDGRDVLGSAPTGTGKTAAYLLPALQHLLDFPRKKSGPPRILILTPTRELAMQVSDHARELAKHTHLDIATITGGVAYMNHAEVFSENQDIVVATTGRLLQYIKEENFDCRAVETLILDEADRMLDMGFAQDIEHIAGETRWRKQTLLFSATLEGDAIQDFAERLLEDPVEVSANPSTRERKKIHQWYYRADDLEHKTALLVHLLKQPEATRSIVFVRKRERVHELANWLREAGINNCYLEGEMVQGKRNEAIKRLTEGRVNVLVATDVAARGIDIPDVSHVFNFDMPRSGDTYLHRIGRTARAGRKGTAISLVEAHDHLLLGKVGRYIEEPIKARVIDELRPKTRAPSEKQTGKPSKKVLAKRAEKKKAKEKEKPRVKKRHRDTKNIGKRRKPSGTGVPPQTTEE.

Positions 4–32 match the Q motif motif; sequence TTFSELELDESLLEALQDKGFTRPTAIQA. The Helicase ATP-binding domain maps to 35 to 209; the sequence is IPPALDGRDV…AERLLEDPVE (175 aa). 48–55 contacts ATP; the sequence is APTGTGKT. The DEAD box signature appears at 157 to 160; it reads DEAD. The 150-residue stretch at 238-387 folds into the Helicase C-terminal domain; that stretch reads LLVHLLKQPE…ELRPKTRAPS (150 aa). The span at 382 to 391 shows a compositional bias: basic and acidic residues; the sequence is KTRAPSEKQT. The tract at residues 382 to 444 is disordered; it reads KTRAPSEKQT…TGVPPQTTEE (63 aa). Basic residues-rich tracts occupy residues 394-406 and 414-432; these read PSKK…AEKK and PRVK…RRKP.

This sequence belongs to the DEAD box helicase family. SrmB subfamily. In terms of assembly, interacts with the 50S ribosomal subunit. Forms a complex with the 50S ribosomal proteins L4 and L24, and a region near the 5'-end of 23S rRNA.

The protein resides in the cytoplasm. It catalyses the reaction ATP + H2O = ADP + phosphate + H(+). Functionally, DEAD-box RNA helicase involved in the assembly of the 50S ribosomal subunit at low temperature. Exhibits RNA-stimulated ATP hydrolysis and RNA unwinding activity. Acts before DeaD. The polypeptide is ATP-dependent RNA helicase SrmB (Escherichia coli (strain K12)).